We begin with the raw amino-acid sequence, 394 residues long: DNA replication and repair protein RecF (394 aa).

Position 30 to 37 (30 to 37) interacts with ATP; sequence GPNAAGKT.

Belongs to the RecF family.

Its subcellular location is the cytoplasm. Functionally, the RecF protein is involved in DNA metabolism; it is required for DNA replication and normal SOS inducibility. RecF binds preferentially to single-stranded, linear DNA. It also seems to bind ATP. The protein is DNA replication and repair protein RecF of Roseiflexus castenholzii (strain DSM 13941 / HLO8).